We begin with the raw amino-acid sequence, 346 residues long: Biotin synthase (346 aa).

Positions R38–T256 constitute a Radical SAM core domain. 3 residues coordinate [4Fe-4S] cluster: C53, C57, and C60. Residues C97, C128, C188, and R260 each coordinate [2Fe-2S] cluster.

The protein belongs to the radical SAM superfamily. Biotin synthase family. In terms of assembly, homodimer. Requires [4Fe-4S] cluster as cofactor. It depends on [2Fe-2S] cluster as a cofactor.

It carries out the reaction (4R,5S)-dethiobiotin + (sulfur carrier)-SH + 2 reduced [2Fe-2S]-[ferredoxin] + 2 S-adenosyl-L-methionine = (sulfur carrier)-H + biotin + 2 5'-deoxyadenosine + 2 L-methionine + 2 oxidized [2Fe-2S]-[ferredoxin]. It functions in the pathway cofactor biosynthesis; biotin biosynthesis; biotin from 7,8-diaminononanoate: step 2/2. Catalyzes the conversion of dethiobiotin (DTB) to biotin by the insertion of a sulfur atom into dethiobiotin via a radical-based mechanism. The polypeptide is Biotin synthase (Cronobacter sakazakii (strain ATCC BAA-894) (Enterobacter sakazakii)).